Reading from the N-terminus, the 282-residue chain is MKLLRYGPSGQEKPGILDADGRIRDLSAHVPDLAGDVLSDAALARLRAIDPATLPLVSGEPRIGACVGRVGKFIGIGLNYADHAAEAGMPVPKEPVVFGKWTSSICGPNDGIDIPKGSVKTDWEVELGVVIGTTCKDVDEARALDYVAGYCVVNDVSEREWQIERGGQWDKGKGFDTFGPIGPWLVTRDEVPDPQRVDLWLEIDGHRYQNGNTRTMVFTVAQLVAYLSTCMTLQPGDVITTGTPPGVGMGIKPSPVFLKAGQTVRLGIDGLGEQLQSTRNAQ.

Mg(2+) contacts are provided by Glu-124, Glu-126, and Asp-155.

Belongs to the FAH family. Requires Mg(2+) as cofactor.

The sequence is that of Putative hydrolase BamMC406_5393 from Burkholderia ambifaria (strain MC40-6).